We begin with the raw amino-acid sequence, 338 residues long: Heat-inducible transcription repressor HrcA (338 aa).

This sequence belongs to the HrcA family.

Functionally, negative regulator of class I heat shock genes (grpE-dnaK-dnaJ and groELS operons). Prevents heat-shock induction of these operons. This chain is Heat-inducible transcription repressor HrcA, found in Bacillus anthracis (strain A0248).